Here is a 189-residue protein sequence, read N- to C-terminus: Large ribosomal subunit protein bL9 (189 aa).

This sequence belongs to the bacterial ribosomal protein bL9 family.

In terms of biological role, binds to the 23S rRNA. This is Large ribosomal subunit protein bL9 from Brucella ovis (strain ATCC 25840 / 63/290 / NCTC 10512).